Here is an 88-residue protein sequence, read N- to C-terminus: UPF0298 protein BcerKBAB4_3759 (88 aa).

This sequence belongs to the UPF0298 family.

The protein localises to the cytoplasm. This is UPF0298 protein BcerKBAB4_3759 from Bacillus mycoides (strain KBAB4) (Bacillus weihenstephanensis).